Consider the following 500-residue polypeptide: MSYFPWLTILVVLPIFAGSLIFFLPHRGNKIVRWYTISICLLEFLLMTYAFCYHFQLEDPLIQLKEDYKWIDILDFHWRLGIDGLSVGSILLTGFITTLATLAAWPVTRNSRLFYFLMLAMYSGQIGLFSSRDLLLFFIMWELELIPVYLLLSMWGGKRRLYSATKFILYTAGGSIFFLIGVLGMGLYGSNEPGLDLERLINQSYPTTLEILLYFGFLIAYAVKLPIIPLHTWLPDTHGEAHYSTCMLLAGILLKMGAYGLIRINMELLPHAHYLFSPWLVIIGAIQIIYAASTSLGQRNFKKRIAYSSVSHMGFIIIGIGSITNIGLNGAILQILSHGFIGATLFFLAGTASDRMRLVYLEELGGISIPMPKIFTMFSSFSMASLALPGMSGFVAELVVFFGLITSPKFLLMPKMLITFVMAIGMILTPIYLLSMLRQMFYGYKLFNVPNANFVDSGPRELFILICIFLPVIGIGIYPDLVLSLSVDRVEALLSNYYPK.

14 consecutive transmembrane segments (helical) span residues 4-24 (FPWLTILVVLPIFAGSLIFFL), 37-57 (ISICLLEFLLMTYAFCYHFQL), 87-107 (VGSILLTGFITTLATLAAWPV), 113-130 (LFYFLMLAMYSGQIGLFS), 134-154 (LLLFFIMWELELIPVYLLLSM), 167-187 (FILYTAGGSIFFLIGVLGMGL), 211-231 (ILLYFGFLIAYAVKLPIIPLH), 242-262 (HYSTCMLLAGILLKMGAYGLI), 272-292 (AHYLFSPWLVIIGAIQIIYAA), 313-333 (MGFIIIGIGSITNIGLNGAIL), 334-354 (QILSHGFIGATLFFLAGTASD), 386-406 (LALPGMSGFVAELVVFFGLIT), 417-437 (LITFVMAIGMILTPIYLLSML), and 462-482 (LFILICIFLPVIGIGIYPDLV).

Belongs to the complex I subunit 4 family.

The protein resides in the plastid. The protein localises to the chloroplast thylakoid membrane. The catalysed reaction is a plastoquinone + NADH + (n+1) H(+)(in) = a plastoquinol + NAD(+) + n H(+)(out). It carries out the reaction a plastoquinone + NADPH + (n+1) H(+)(in) = a plastoquinol + NADP(+) + n H(+)(out). This is NAD(P)H-quinone oxidoreductase chain 4, chloroplastic from Agrostis stolonifera (Creeping bentgrass).